We begin with the raw amino-acid sequence, 166 residues long: Protein UL5 (166 aa).

It belongs to the RL11 family. As to quaternary structure, interacts with host IQGAP1.

The protein localises to the host cytoplasm. Functionally, may play a role in rearrangement of cellular cytoskeleton towards an efficient viral assembly and spreading. The protein is Protein UL5 (UL5) of Human cytomegalovirus (strain AD169) (HHV-5).